We begin with the raw amino-acid sequence, 246 residues long: Tyrosine recombinase XerD-like (246 aa).

A Core-binding (CB) domain is found at 1–72 (MINDINNFIE…AVNQFLFFLY (72 aa)). Residues 84-246 (QETEKITLTQ…TPITLERYYR (163 aa)) enclose the Tyr recombinase domain. Active-site residues include lysine 149 and arginine 212. Tyrosine 244 (O-(3'-phospho-DNA)-tyrosine intermediate) is an active-site residue.

This sequence belongs to the 'phage' integrase family. XerD-like subfamily.

The protein resides in the cytoplasm. In terms of biological role, putative tyrosine recombinase. Not involved in the cutting and rejoining of the recombining DNA molecules on dif(SL) site. In Streptococcus agalactiae serotype III (strain NEM316), this protein is Tyrosine recombinase XerD-like.